The following is a 243-amino-acid chain: MSQTHFGFQQVDEQEKAGKVAGVFHSVASKYDVMNDLMSGGLHRVWKMFTIAQAAVRPGYKVLDIAGGTGDLAKAFARQAGPTGEVWLTDINESMLRVGRDRLLDAGVLTPTALCDAEHIPFPNAYFDVVTVAFGLRNMTHKDRALAEMRRVVKPGGKVMVLEFSKVWQPLEKAYDVYSFKVLPWLGSKVAGDPESYRYLAESIRMHPDQETLKQMMEQAGLDSVEYFNLTAGVVALHVGRRL.

S-adenosyl-L-methionine is bound by residues T69, D90, and 116 to 117 (DA).

It belongs to the class I-like SAM-binding methyltransferase superfamily. MenG/UbiE family.

The catalysed reaction is a 2-demethylmenaquinol + S-adenosyl-L-methionine = a menaquinol + S-adenosyl-L-homocysteine + H(+). It catalyses the reaction a 2-methoxy-6-(all-trans-polyprenyl)benzene-1,4-diol + S-adenosyl-L-methionine = a 5-methoxy-2-methyl-3-(all-trans-polyprenyl)benzene-1,4-diol + S-adenosyl-L-homocysteine + H(+). The protein operates within quinol/quinone metabolism; menaquinone biosynthesis; menaquinol from 1,4-dihydroxy-2-naphthoate: step 2/2. It participates in cofactor biosynthesis; ubiquinone biosynthesis. Methyltransferase required for the conversion of demethylmenaquinol (DMKH2) to menaquinol (MKH2) and the conversion of 2-polyprenyl-6-methoxy-1,4-benzoquinol (DDMQH2) to 2-polyprenyl-3-methyl-6-methoxy-1,4-benzoquinol (DMQH2). This chain is Ubiquinone/menaquinone biosynthesis C-methyltransferase UbiE, found in Ralstonia pickettii (strain 12J).